The following is a 253-amino-acid chain: Flagellar brake protein YcgR (253 aa).

The 120-residue stretch at 120–239 folds into the PilZ domain; it reads QRRDFYRFAT…NEGLINRYVY (120 aa).

This sequence belongs to the YcgR family. Monomer. Interacts with the flagellar basal bodies.

The protein localises to the bacterial flagellum basal body. In terms of biological role, acts as a flagellar brake, regulating swimming and swarming in a bis-(3'-5') cyclic diguanylic acid (c-di-GMP)-dependent manner. Binds 1 c-di-GMP dimer per subunit. Increasing levels of c-di-GMP lead to decreased motility. In Methylotenera mobilis (strain JLW8 / ATCC BAA-1282 / DSM 17540), this protein is Flagellar brake protein YcgR.